A 190-amino-acid polypeptide reads, in one-letter code: Zinc finger C2H2 protein ECU03_0790 (190 aa).

4 consecutive C2H2-type zinc fingers follow at residues 4-27 (RCCF…LNTH), 33-55 (YKCD…KKKH), 85-108 (YKCG…ESHH), and 119-142 (HVCE…RSVH).

The chain is Zinc finger C2H2 protein ECU03_0790 from Encephalitozoon cuniculi (strain GB-M1) (Microsporidian parasite).